The primary structure comprises 451 residues: Tubulin alpha-1 chain (451 aa).

Q11 contacts GTP. K40 is modified (N6-acetyllysine). GTP contacts are provided by E71, G144, T145, T179, N206, and N228. E71 is a binding site for Mg(2+). Residue E254 is part of the active site.

It belongs to the tubulin family. Dimer of alpha and beta chains. A typical microtubule is a hollow water-filled tube with an outer diameter of 25 nm and an inner diameter of 15 nM. Alpha-beta heterodimers associate head-to-tail to form protofilaments running lengthwise along the microtubule wall with the beta-tubulin subunit facing the microtubule plus end conferring a structural polarity. Microtubules usually have 13 protofilaments but different protofilament numbers can be found in some organisms and specialized cells. Mg(2+) is required as a cofactor. Post-translationally, undergoes a tyrosination/detyrosination cycle, the cyclic removal and re-addition of a C-terminal tyrosine residue by the enzymes tubulin tyrosine carboxypeptidase (TTCP) and tubulin tyrosine ligase (TTL), respectively. In terms of processing, acetylation of alpha chains at Lys-40 stabilizes microtubules and affects affinity and processivity of microtubule motors. This modification has a role in multiple cellular functions, ranging from cell motility, cell cycle progression or cell differentiation to intracellular trafficking and signaling.

The protein localises to the cytoplasm. The protein resides in the cytoskeleton. The catalysed reaction is GTP + H2O = GDP + phosphate + H(+). Functionally, tubulin is the major constituent of microtubules, a cylinder consisting of laterally associated linear protofilaments composed of alpha- and beta-tubulin heterodimers. Microtubules grow by the addition of GTP-tubulin dimers to the microtubule end, where a stabilizing cap forms. Below the cap, tubulin dimers are in GDP-bound state, owing to GTPase activity of alpha-tubulin. This is Tubulin alpha-1 chain (TUBA1) from Eleusine indica (Goosegrass).